The primary structure comprises 378 residues: Alginate lyase (378 aa).

Residues 1-28 form the signal peptide; that stretch reads MQTPKLIRPTLLSMAILSSMAWATGASA. Residues 67–68, 140–141, and Tyr258 each bind substrate; these read SK and HT. The tract at residues 359–378 is disordered; it reads LTKVYDPSHEKGDKGDNDGS. The span at 364–378 shows a compositional bias: basic and acidic residues; the sequence is DPSHEKGDKGDNDGS.

It belongs to the polysaccharide lyase 5 family.

The protein localises to the periplasm. The enzyme catalyses Eliminative cleavage of alginate to give oligosaccharides with 4-deoxy-alpha-L-erythro-hex-4-enuronosyl groups at their non-reducing ends and beta-D-mannuronate at their reducing end.. Functionally, catalyzes the depolymerization of alginate by cleaving the beta-1,4 glycosidic bond between two adjacent sugar residues via a beta-elimination mechanism. May serve to degrade mislocalized alginate that is trapped in the periplasmic space. The polypeptide is Alginate lyase (Pseudomonas syringae pv. syringae (strain B728a)).